We begin with the raw amino-acid sequence, 211 residues long: Abscisic acid receptor PYL7 (211 aa).

Residues 29–180 (HHCRENQCTS…NLKSLACVSE (152 aa)) are START-like. Intrachain disulfides connect C31/C161 and C36/C161. Abscisate-binding positions include K65, 93–98 (ATTSTE), 120–126 (RLKNYSS), and E145. The Gate loop motif lies at 89–93 (SGLPA). The Latch loop motif lies at 119–121 (HRL).

The protein belongs to the PYR/PYL/RCAR abscisic acid intracellular receptor family. In terms of assembly, homodimer. Binds ABA on one subunit only. Binds to CARs protein in an ABA-independent manner, both at the plasma membrane and in the nucleus. Interacts with ABI1, and possibly with other PP2Cs.

The protein localises to the cytoplasm. The protein resides in the nucleus. It localises to the cell membrane. In terms of biological role, receptor for abscisic acid (ABA) required for ABA-mediated responses such as stomatal closure and germination inhibition. Inhibits the activity of group-A protein phosphatases type 2C (PP2Cs) when activated by ABA. This is Abscisic acid receptor PYL7 (PYL7) from Arabidopsis thaliana (Mouse-ear cress).